The sequence spans 729 residues: Polyribonucleotide nucleotidyltransferase (729 aa).

Mg(2+)-binding residues include D509 and D515. One can recognise a KH domain in the interval 575–634; the sequence is PRVISVKIPVDKIGEVIGPKGKMINQIQADSGAEITVEDDGTIYIGAVDGPSAESARSAI. Residues 646–718 form the S1 motif domain; that stretch reads GERYLGTIVK…SRGKISLSPS (73 aa).

This sequence belongs to the polyribonucleotide nucleotidyltransferase family. Mg(2+) serves as cofactor.

Its subcellular location is the cytoplasm. The catalysed reaction is RNA(n+1) + phosphate = RNA(n) + a ribonucleoside 5'-diphosphate. Its function is as follows. Involved in mRNA degradation. Catalyzes the phosphorolysis of single-stranded polyribonucleotides processively in the 3'- to 5'-direction. This is Polyribonucleotide nucleotidyltransferase from Frankia casuarinae (strain DSM 45818 / CECT 9043 / HFP020203 / CcI3).